Here is a 113-residue protein sequence, read N- to C-terminus: Transcription initiation factor IIA subunit 2 (113 aa).

Belongs to the TFIIA subunit 2 family. As to quaternary structure, TFIIA is a heterodimer of the large unprocessed subunit 1 and a small subunit gamma. It was originally believed to be a heterotrimer of an alpha, a beta and a gamma subunit.

The protein localises to the nucleus. In terms of biological role, TFIIA is a component of the transcription machinery of RNA polymerase II and plays an important role in transcriptional activation. TFIIA in a complex with TBP mediates transcriptional activity. The protein is Transcription initiation factor IIA subunit 2 of Caenorhabditis elegans.